We begin with the raw amino-acid sequence, 368 residues long: Large ribosomal subunit protein mL46 (368 aa).

The segment at 53–81 is disordered; sequence TATATTTTTLPPPHPPVTTSTGTHAATST. Low complexity predominate over residues 69-81; the sequence is VTTSTGTHAATST.

The protein belongs to the mitochondrion-specific ribosomal protein mL46 family. In terms of assembly, component of the mitochondrial large ribosomal subunit (mt-LSU). Mature N.crassa 74S mitochondrial ribosomes consist of a small (37S) and a large (54S) subunit. The 37S small subunit contains a 16S ribosomal RNA (16S mt-rRNA) and 32 different proteins. The 54S large subunit contains a 23S rRNA (23S mt-rRNA) and 42 different proteins.

The protein resides in the mitochondrion. Its function is as follows. Component of the mitochondrial ribosome (mitoribosome), a dedicated translation machinery responsible for the synthesis of mitochondrial genome-encoded proteins, including at least some of the essential transmembrane subunits of the mitochondrial respiratory chain. The mitoribosomes are attached to the mitochondrial inner membrane and translation products are cotranslationally integrated into the membrane. This Neurospora crassa (strain ATCC 24698 / 74-OR23-1A / CBS 708.71 / DSM 1257 / FGSC 987) protein is Large ribosomal subunit protein mL46 (mrpl17).